Here is a 78-residue protein sequence, read N- to C-terminus: MSNKGQTLQDPFLNTLRKEHVPVSIYLVNGIKLQGQIESFDQYVVLLRNTVTQMVYKHAISTVVPARAVNFQVEVPAE.

The Sm domain maps to 10–69 (DPFLNTLRKEHVPVSIYLVNGIKLQGQIESFDQYVVLLRNTVTQMVYKHAISTVVPARAV).

Belongs to the Hfq family. In terms of assembly, homohexamer.

In terms of biological role, RNA chaperone that binds small regulatory RNA (sRNAs) and mRNAs to facilitate mRNA translational regulation in response to envelope stress, environmental stress and changes in metabolite concentrations. Also binds with high specificity to tRNAs. This Bordetella bronchiseptica (strain ATCC BAA-588 / NCTC 13252 / RB50) (Alcaligenes bronchisepticus) protein is RNA-binding protein Hfq.